A 512-amino-acid chain; its full sequence is Retinaldehyde dehydrogenase 3 (512 aa).

The interval 1-23 (MATANGAVENGQPDGKPPALPRP) is disordered. Ala2 carries the post-translational modification N-acetylalanine. NAD(+) contacts are provided by residues Lys204, Glu207, and 257–262 (GSTEVG). Glu280 acts as the Proton acceptor in catalysis. Cys314 functions as the Nucleophile in the catalytic mechanism. The NAD(+) site is built by Gln361 and Glu411.

The protein belongs to the aldehyde dehydrogenase family. Homotetramer.

It is found in the cytoplasm. It carries out the reaction all-trans-retinal + NAD(+) + H2O = all-trans-retinoate + NADH + 2 H(+). It catalyses the reaction retinal + NAD(+) + H2O = retinoate + NADH + 2 H(+). The catalysed reaction is all-trans-13,14-dihydroretinal + NAD(+) + H2O = all-trans-13,14-dihydroretinoate + NADH + 2 H(+). It functions in the pathway cofactor metabolism; retinol metabolism. In terms of biological role, catalyzes the NAD-dependent oxidation of aldehyde substrates, such as all-trans-retinal and all-trans-13,14-dihydroretinal, to their corresponding carboxylic acids, all-trans-retinoate and all-trans-13,14-dihydroretinoate, respectively. High specificity for all-trans-retinal as substrate, can also accept acetaldehyde as substrate in vitro but with lower affinity. Required for the biosynthesis of normal levels of retinoate in the embryonic ocular and nasal regions; a critical lipid in the embryonic development of the eye and the nasal region. The chain is Retinaldehyde dehydrogenase 3 (Aldh1a3) from Rattus norvegicus (Rat).